The primary structure comprises 338 residues: Uroporphyrinogen decarboxylase (338 aa).

Substrate-binding positions include 27–31 (RQAGR), Asp-77, Tyr-151, Ser-203, and His-317.

The protein belongs to the uroporphyrinogen decarboxylase family. In terms of assembly, homodimer.

It localises to the cytoplasm. It carries out the reaction uroporphyrinogen III + 4 H(+) = coproporphyrinogen III + 4 CO2. The protein operates within porphyrin-containing compound metabolism; protoporphyrin-IX biosynthesis; coproporphyrinogen-III from 5-aminolevulinate: step 4/4. Its function is as follows. Catalyzes the decarboxylation of four acetate groups of uroporphyrinogen-III to yield coproporphyrinogen-III. The chain is Uroporphyrinogen decarboxylase from Wolbachia sp. subsp. Drosophila simulans (strain wRi).